The following is a 328-amino-acid chain: Nuclear transcription factor Y subunit A-8 (328 aa).

The disordered stretch occupies residues 54–86; it reads KNISFQDQDSSSTLSSAQSSNDVTSSGDDNPSR. A compositionally biased stretch (low complexity) spans 57–75; that stretch reads SFQDQDSSSTLSSAQSSND. A compositionally biased stretch (polar residues) spans 76–86; the sequence is VTSSGDDNPSR. Residues 175–198 carry the Subunit association domain (SAD) motif; sequence FVNAKQFHAIMRRRQQRAKLEAQN. The segment at residues 205 to 230 is a DNA-binding region (NFYA/HAP2-type); the sequence is KPYLHESRHVHALKRPRGSGGRFLNT.

Belongs to the NFYA/HAP2 subunit family. As to quaternary structure, heterotrimeric transcription factor composed of three components, NF-YA, NF-YB and NF-YC. NF-YB and NF-YC must interact and dimerize for NF-YA association and DNA binding. As to expression, expressed in the whole plant, except roots.

It localises to the nucleus. Its function is as follows. Stimulates the transcription of various genes by recognizing and binding to a CCAAT motif in promoters. This Arabidopsis thaliana (Mouse-ear cress) protein is Nuclear transcription factor Y subunit A-8 (NFYA8).